Here is a 433-residue protein sequence, read N- to C-terminus: Trigger factor (433 aa).

The 86-residue stretch at 163-248 (GDVVVLDFAA…VHAVKERRLP (86 aa)) folds into the PPIase FKBP-type domain.

The protein belongs to the FKBP-type PPIase family. Tig subfamily.

The protein resides in the cytoplasm. It catalyses the reaction [protein]-peptidylproline (omega=180) = [protein]-peptidylproline (omega=0). Functionally, involved in protein export. Acts as a chaperone by maintaining the newly synthesized protein in an open conformation. Functions as a peptidyl-prolyl cis-trans isomerase. The protein is Trigger factor of Nitratidesulfovibrio vulgaris (strain ATCC 29579 / DSM 644 / CCUG 34227 / NCIMB 8303 / VKM B-1760 / Hildenborough) (Desulfovibrio vulgaris).